A 248-amino-acid chain; its full sequence is Ubiquinone biosynthesis O-methyltransferase (248 aa).

Positions 41, 72, 93, and 136 each coordinate S-adenosyl-L-methionine.

This sequence belongs to the methyltransferase superfamily. UbiG/COQ3 family.

The catalysed reaction is a 3-demethylubiquinol + S-adenosyl-L-methionine = a ubiquinol + S-adenosyl-L-homocysteine + H(+). It carries out the reaction a 3-(all-trans-polyprenyl)benzene-1,2-diol + S-adenosyl-L-methionine = a 2-methoxy-6-(all-trans-polyprenyl)phenol + S-adenosyl-L-homocysteine + H(+). Its pathway is cofactor biosynthesis; ubiquinone biosynthesis. Its function is as follows. O-methyltransferase that catalyzes the 2 O-methylation steps in the ubiquinone biosynthetic pathway. The sequence is that of Ubiquinone biosynthesis O-methyltransferase from Brucella melitensis biotype 2 (strain ATCC 23457).